We begin with the raw amino-acid sequence, 113 residues long: Hydrogenase maturation factor HypA (113 aa).

A Ni(2+)-binding site is contributed by histidine 2. Cysteine 73, cysteine 76, cysteine 89, and cysteine 92 together coordinate Zn(2+).

It belongs to the HypA/HybF family.

Functionally, involved in the maturation of [NiFe] hydrogenases. Required for nickel insertion into the metal center of the hydrogenase. In Rhodopseudomonas palustris (strain BisB5), this protein is Hydrogenase maturation factor HypA.